Consider the following 285-residue polypeptide: MSDDFLWFEGIAFPTMGFRSETLRKVRDEFVIRDEDVIILTYPKSGTNWLAEILCLMHSKGDAKWIQSVPIWERSPWVESEIGYTALSETESPRLFSSHLPIQLFPKSFFSSKAKVIYLMRNPRDVLVSGYFFWKNMKFIKKPKSWEEYFEWFCQGTVLYGSWFDHIHGWMPMREEKNFLLLSYEELKQDTGRTIEKICQFLGKTLEPEELNLILKNSSFQSMKENKMSNYSLLSVDYVVDKAQLLRKGVSGDWKNHFTVAQAEDFDKLFQEKMADLPRELFPWE.

3'-phosphoadenylyl sulfate is bound by residues lysine 44, serine 45, glycine 46, threonine 47, asparagine 48, and tryptophan 49. Catalysis depends on histidine 99, which acts as the Proton acceptor. The 3'-phosphoadenylyl sulfate site is built by arginine 121, serine 129, tyrosine 184, serine 218, methionine 223, arginine 247, lysine 248, and glycine 249. At serine 251 the chain carries Phosphoserine.

It belongs to the sulfotransferase 1 family. As to quaternary structure, homodimer. The N-terminus is blocked. As to expression, liver, adrenal and at lower level in the kidney. Is present in human fetus in higher level in the adrenal than the liver and the kidney.

It is found in the cytoplasm. The catalysed reaction is an alcohol + 3'-phosphoadenylyl sulfate = an alkyl sulfate + adenosine 3',5'-bisphosphate + H(+). It carries out the reaction (24S)-hydroxycholesterol + 3'-phosphoadenylyl sulfate = (24S)-hydroxycholesterol 24-sulfate + adenosine 3',5'-bisphosphate + H(+). It catalyses the reaction (24S)-hydroxycholesterol + 3'-phosphoadenylyl sulfate = (24S)-hydroxycholesterol 3-sulfate + adenosine 3',5'-bisphosphate + H(+). The enzyme catalyses (24S)-hydroxycholesterol 24-sulfate + 3'-phosphoadenylyl sulfate = (24S)-hydroxycholesterol 3,24-disulfate + adenosine 3',5'-bisphosphate + H(+). The catalysed reaction is 3beta-hydroxyandrost-5-en-17-one + 3'-phosphoadenylyl sulfate = dehydroepiandrosterone 3-sulfate + adenosine 3',5'-bisphosphate + H(+). It carries out the reaction pregnenolone + 3'-phosphoadenylyl sulfate = pregnenolone sulfate + adenosine 3',5'-bisphosphate + H(+). It catalyses the reaction androsterone + 3'-phosphoadenylyl sulfate = androsterone 3alpha-sulfate + adenosine 3',5'-bisphosphate + H(+). The enzyme catalyses taurolithocholate + 3'-phosphoadenylyl sulfate = taurolithocholate 3-sulfate + adenosine 3',5'-bisphosphate + H(+). The catalysed reaction is lithocholate + 3'-phosphoadenylyl sulfate = lithocholate sulfate + adenosine 3',5'-bisphosphate + H(+). Its activity is regulated as follows. Subject to substrate inhibition. Alternate orientations for binding of steroid substrates to SULT2A1 may play a role in substrate inhibition. Functionally, sulfotransferase that utilizes 3'-phospho-5'-adenylyl sulfate (PAPS) as sulfonate donor to catalyze the sulfonation of steroids and bile acids in the liver and adrenal glands. Mediates the sulfation of a wide range of steroids and sterols, including pregnenolone, androsterone, DHEA, bile acids, cholesterol and as well many xenobiotics that contain alcohol and phenol functional groups. Sulfonation increases the water solubility of most compounds, and therefore their renal excretion, but it can also result in bioactivation to form active metabolites. Plays an important role in maintening steroid and lipid homeostasis. Plays a key role in bile acid metabolism. In addition, catalyzes the metabolic activation of potent carcinogenic polycyclic arylmethanols. This is Sulfotransferase 2A1 (SULT2A1) from Homo sapiens (Human).